The following is a 287-amino-acid chain: ATP synthase gamma chain (287 aa).

The protein belongs to the ATPase gamma chain family. In terms of assembly, F-type ATPases have 2 components, CF(1) - the catalytic core - and CF(0) - the membrane proton channel. CF(1) has five subunits: alpha(3), beta(3), gamma(1), delta(1), epsilon(1). CF(0) has three main subunits: a, b and c.

The protein resides in the cell inner membrane. Functionally, produces ATP from ADP in the presence of a proton gradient across the membrane. The gamma chain is believed to be important in regulating ATPase activity and the flow of protons through the CF(0) complex. In Photorhabdus laumondii subsp. laumondii (strain DSM 15139 / CIP 105565 / TT01) (Photorhabdus luminescens subsp. laumondii), this protein is ATP synthase gamma chain.